The primary structure comprises 294 residues: Pyridoxal 5'-phosphate synthase subunit PdxS (294 aa).

D24 contributes to the D-ribose 5-phosphate binding site. The Schiff-base intermediate with D-ribose 5-phosphate role is filled by K81. D-ribose 5-phosphate is bound at residue G153. R165 lines the D-glyceraldehyde 3-phosphate pocket. Residues G214 and 235 to 236 (GS) contribute to the D-ribose 5-phosphate site.

It belongs to the PdxS/SNZ family. As to quaternary structure, in the presence of PdxT, forms a dodecamer of heterodimers.

It catalyses the reaction aldehydo-D-ribose 5-phosphate + D-glyceraldehyde 3-phosphate + L-glutamine = pyridoxal 5'-phosphate + L-glutamate + phosphate + 3 H2O + H(+). It functions in the pathway cofactor biosynthesis; pyridoxal 5'-phosphate biosynthesis. Its function is as follows. Catalyzes the formation of pyridoxal 5'-phosphate from ribose 5-phosphate (RBP), glyceraldehyde 3-phosphate (G3P) and ammonia. The ammonia is provided by the PdxT subunit. Can also use ribulose 5-phosphate and dihydroxyacetone phosphate as substrates, resulting from enzyme-catalyzed isomerization of RBP and G3P, respectively. This Bacillus licheniformis (strain ATCC 14580 / DSM 13 / JCM 2505 / CCUG 7422 / NBRC 12200 / NCIMB 9375 / NCTC 10341 / NRRL NRS-1264 / Gibson 46) protein is Pyridoxal 5'-phosphate synthase subunit PdxS.